Consider the following 55-residue polypeptide: UPF0391 membrane protein NE1120 (55 aa).

Helical transmembrane passes span 4-24 and 27-47; these read MALVFFLIAVLAGILGFAGIA and LAWAAKVLFFAGLILTVVFYL.

It belongs to the UPF0391 family.

The protein resides in the cell membrane. The chain is UPF0391 membrane protein NE1120 from Nitrosomonas europaea (strain ATCC 19718 / CIP 103999 / KCTC 2705 / NBRC 14298).